The chain runs to 468 residues: Secreted triacylglycerol lipase LIP2 (468 aa).

The N-terminal stretch at 1–22 is a signal peptide; the sequence is MFGFRLFILAAVALAYIQCAAA. C125 and C295 are joined by a disulfide. S209 serves as the catalytic Nucleophile. N242, N252, and N279 each carry an N-linked (GlcNAc...) asparagine glycan. Catalysis depends on residues D355 and H389.

The protein belongs to the AB hydrolase superfamily. Lipase family. Class Lip subfamily.

The protein resides in the secreted. It carries out the reaction a triacylglycerol + H2O = a diacylglycerol + a fatty acid + H(+). The enzyme catalyses a monoacylglycerol + H2O = glycerol + a fatty acid + H(+). It catalyses the reaction a diacylglycerol + H2O = a monoacylglycerol + a fatty acid + H(+). In terms of biological role, secreted lipase that hydrolyzes acylglycerol lipids such as triacylglycerols and consequently releases free fatty acid. Due to an absence of fatty acid synthase genes in Malassezia species, secretory lipases are essential for the yeast to generate free fatty acids from degradation of sebum and assimilate them as lipid sources for growth. Plays important roles not only in lipid metabolism but also in the immune response of host cells and pathogenesis. In Malassezia furfur (Pityriasis versicolor infection agent), this protein is Secreted triacylglycerol lipase LIP2.